The sequence spans 299 residues: MNPLETEIGGLRMKNPLMLASGIMGSKVHSLNLIARDAGAVVTKSVGVEEREGYRNPTVVNWKCGLINAVGLASPAAKDFAEELKDYTNEAPLLISLYGHSVEEFSDLVDTFDSALPYLHGYELNLSCPHVKGAGLDIGMDLELSAAIVEELKGKTKNPVFAKLSAMHDYLKLAKVLEDAGVDGITISNTLRGMKIDIMSGKPVLSNLSGGVSGPAIKPIALKCVYDLYKEIEVPIVGCGGITSFEDVLEFIMAGARAVQIGSAVYYSRRIFYSLKESLIAFTRARDCTISDLIGIAHS.

FMN-binding positions include Ser21 and 44 to 45 (KS). Residues Lys44, 68 to 72 (NAVGL), and Asn125 contribute to the substrate site. Asn125 serves as a coordination point for FMN. Cys128 serves as the catalytic Nucleophile. FMN is bound at residue Lys163. 189-190 (NT) contributes to the substrate binding site. FMN contacts are provided by residues Gly214, 240–241 (GG), and 262–263 (GS).

Belongs to the dihydroorotate dehydrogenase family. Type 1 subfamily. Heterotetramer of 2 PyrK and 2 PyrD type B subunits. The cofactor is FMN.

The protein localises to the cytoplasm. The enzyme catalyses (S)-dihydroorotate + NAD(+) = orotate + NADH + H(+). Its pathway is pyrimidine metabolism; UMP biosynthesis via de novo pathway; orotate from (S)-dihydroorotate (NAD(+) route): step 1/1. Functionally, catalyzes the conversion of dihydroorotate to orotate with NAD(+) as electron acceptor. This chain is Dihydroorotate dehydrogenase B (NAD(+)), catalytic subunit (pyrD), found in Archaeoglobus fulgidus (strain ATCC 49558 / DSM 4304 / JCM 9628 / NBRC 100126 / VC-16).